A 152-amino-acid chain; its full sequence is Endoribonuclease YbeY (152 aa).

Zn(2+) is bound by residues His-113, His-117, and His-123.

This sequence belongs to the endoribonuclease YbeY family. The cofactor is Zn(2+).

The protein resides in the cytoplasm. Single strand-specific metallo-endoribonuclease involved in late-stage 70S ribosome quality control and in maturation of the 3' terminus of the 16S rRNA. The polypeptide is Endoribonuclease YbeY (Delftia acidovorans (strain DSM 14801 / SPH-1)).